Here is a 340-residue protein sequence, read N- to C-terminus: Ketol-acid reductoisomerase (NADP(+)) (340 aa).

Positions 3–183 (INVYYDKDCD…GGGRTGIIET (181 aa)) constitute a KARI N-terminal Rossmann domain. Residues 26-29 (FGSQ), Ser54, and 84-87 (DELQ) each bind NADP(+). Residue His109 is part of the active site. Gly135 provides a ligand contact to NADP(+). The KARI C-terminal knotted domain occupies 184–329 (TFKDETETDL…KKLRAMMPWI (146 aa)). Residues Asp192, Glu196, Glu228, and Glu232 each contribute to the Mg(2+) site. Substrate is bound at residue Ser253.

This sequence belongs to the ketol-acid reductoisomerase family. The cofactor is Mg(2+).

The catalysed reaction is (2R)-2,3-dihydroxy-3-methylbutanoate + NADP(+) = (2S)-2-acetolactate + NADPH + H(+). The enzyme catalyses (2R,3R)-2,3-dihydroxy-3-methylpentanoate + NADP(+) = (S)-2-ethyl-2-hydroxy-3-oxobutanoate + NADPH + H(+). It participates in amino-acid biosynthesis; L-isoleucine biosynthesis; L-isoleucine from 2-oxobutanoate: step 2/4. Its pathway is amino-acid biosynthesis; L-valine biosynthesis; L-valine from pyruvate: step 2/4. Functionally, involved in the biosynthesis of branched-chain amino acids (BCAA). Catalyzes an alkyl-migration followed by a ketol-acid reduction of (S)-2-acetolactate (S2AL) to yield (R)-2,3-dihydroxy-isovalerate. In the isomerase reaction, S2AL is rearranged via a Mg-dependent methyl migration to produce 3-hydroxy-3-methyl-2-ketobutyrate (HMKB). In the reductase reaction, this 2-ketoacid undergoes a metal-dependent reduction by NADPH to yield (R)-2,3-dihydroxy-isovalerate. The polypeptide is Ketol-acid reductoisomerase (NADP(+)) (Campylobacter concisus (strain 13826)).